A 68-amino-acid polypeptide reads, in one-letter code: ATP synthase F(0) complex subunit 8 (68 aa).

Residues 8–24 traverse the membrane as a helical segment; it reads TWLITILSMILTLLIVF. An N6-acetyllysine; alternate modification is found at Lys54. Lys54 carries the N6-succinyllysine; alternate modification. Lys57 bears the N6-acetyllysine mark.

The protein belongs to the ATPase protein 8 family. Component of the ATP synthase complex composed at least of ATP5F1A/subunit alpha, ATP5F1B/subunit beta, ATP5MC1/subunit c (homooctomer), MT-ATP6/subunit a, MT-ATP8/subunit 8, ATP5ME/subunit e, ATP5MF/subunit f, ATP5MG/subunit g, ATP5MK/subunit k, ATP5MJ/subunit j, ATP5F1C/subunit gamma, ATP5F1D/subunit delta, ATP5F1E/subunit epsilon, ATP5PF/subunit F6, ATP5PB/subunit b, ATP5PD/subunit d, ATP5PO/subunit OSCP. ATP synthase complex consists of a soluble F(1) head domain (subunits alpha(3) and beta(3)) - the catalytic core - and a membrane F(0) domain - the membrane proton channel (subunits c, a, 8, e, f, g, k and j). These two domains are linked by a central stalk (subunits gamma, delta, and epsilon) rotating inside the F1 region and a stationary peripheral stalk (subunits F6, b, d, and OSCP). Interacts with PRICKLE3.

It localises to the mitochondrion membrane. Functionally, subunit 8, of the mitochondrial membrane ATP synthase complex (F(1)F(0) ATP synthase or Complex V) that produces ATP from ADP in the presence of a proton gradient across the membrane which is generated by electron transport complexes of the respiratory chain. ATP synthase complex consist of a soluble F(1) head domain - the catalytic core - and a membrane F(1) domain - the membrane proton channel. These two domains are linked by a central stalk rotating inside the F(1) region and a stationary peripheral stalk. During catalysis, ATP synthesis in the catalytic domain of F(1) is coupled via a rotary mechanism of the central stalk subunits to proton translocation. In vivo, can only synthesize ATP although its ATP hydrolase activity can be activated artificially in vitro. Part of the complex F(0) domain. The chain is ATP synthase F(0) complex subunit 8 from Lemur catta (Ring-tailed lemur).